The chain runs to 188 residues: Putative pre-16S rRNA nuclease (188 aa).

Positions 156 to 188 are disordered; the sequence is LRQGDAAPGGSDDERDEDGDTDGEDGGGDGGGE. Positions 166 to 188 are enriched in acidic residues; it reads SDDERDEDGDTDGEDGGGDGGGE.

The protein belongs to the YqgF nuclease family.

It localises to the cytoplasm. Its function is as follows. Could be a nuclease involved in processing of the 5'-end of pre-16S rRNA. The polypeptide is Putative pre-16S rRNA nuclease (Rhodospirillum centenum (strain ATCC 51521 / SW)).